Here is a 502-residue protein sequence, read N- to C-terminus: D-erythritol 1-phosphate dehydrogenase (502 aa).

8–36 (DLFVIGGGINGAGVARDAAGRGLKVVLAE) contributes to the FAD binding site.

This sequence belongs to the FAD-dependent glycerol-3-phosphate dehydrogenase family. Requires FAD as cofactor.

It carries out the reaction D-erythritol 1-phosphate + NADP(+) = D-erythrulose 1-phosphate + NADPH + H(+). It participates in carbohydrate metabolism; erythritol degradation. Functionally, catalyzes the oxydation of D-erythritol 1-phosphate to D-erythrulose 1-phosphate. The protein is D-erythritol 1-phosphate dehydrogenase of Brucella abortus (strain 2308).